A 137-amino-acid chain; its full sequence is Holo-[acyl-carrier-protein] synthase (137 aa).

Residues Asp7 and Glu58 each contribute to the Mg(2+) site.

This sequence belongs to the P-Pant transferase superfamily. AcpS family. Requires Mg(2+) as cofactor.

The protein localises to the cytoplasm. It carries out the reaction apo-[ACP] + CoA = holo-[ACP] + adenosine 3',5'-bisphosphate + H(+). Transfers the 4'-phosphopantetheine moiety from coenzyme A to a Ser of acyl-carrier-protein. The polypeptide is Holo-[acyl-carrier-protein] synthase (Chloroflexus aurantiacus (strain ATCC 29366 / DSM 635 / J-10-fl)).